A 738-amino-acid polypeptide reads, in one-letter code: Dipeptidyl peptidase 3 (738 aa).

N-acetylalanine is present on A2. H450 provides a ligand contact to Zn(2+). E451 is a catalytic residue. Zn(2+) contacts are provided by H455 and E508.

It belongs to the peptidase M49 family. The cofactor is Zn(2+).

The protein localises to the cytoplasm. Its subcellular location is the cytosol. It carries out the reaction Release of an N-terminal dipeptide from a peptide comprising four or more residues, with broad specificity. Also acts on dipeptidyl 2-naphthylamides.. Functionally, cleaves and degrades bioactive peptides, including angiotensin, Leu-enkephalin and Met-enkephalin. Also cleaves Arg-Arg-beta-naphthylamide (in vitro). This Mus musculus (Mouse) protein is Dipeptidyl peptidase 3 (Dpp3).